A 1033-amino-acid polypeptide reads, in one-letter code: Error-prone DNA polymerase (1033 aa).

The protein belongs to the DNA polymerase type-C family. DnaE2 subfamily.

The protein resides in the cytoplasm. The catalysed reaction is DNA(n) + a 2'-deoxyribonucleoside 5'-triphosphate = DNA(n+1) + diphosphate. Its function is as follows. DNA polymerase involved in damage-induced mutagenesis and translesion synthesis (TLS). It is not the major replicative DNA polymerase. This Teredinibacter turnerae (strain ATCC 39867 / T7901) protein is Error-prone DNA polymerase.